A 340-amino-acid chain; its full sequence is Putative D-lactate dehydrogenase (340 aa).

Residues 153-154 (NI), Asp174, 206-207 (TP), 233-235 (VSR), and Asp259 each bind NAD(+). Arg235 is an active-site residue. Glu264 is a catalytic residue. Residue His296 is the Proton donor of the active site.

The protein belongs to the D-isomer specific 2-hydroxyacid dehydrogenase family.

It catalyses the reaction (R)-lactate + NAD(+) = pyruvate + NADH + H(+). The protein is Putative D-lactate dehydrogenase (ldhA) of Dictyostelium discoideum (Social amoeba).